The primary structure comprises 438 residues: Plasmalemma vesicle-associated protein (438 aa).

At 1-26 (MGLSMDRSPYSRTGDRDRGCWYYLRY) the chain is on the cytoplasmic side. A helical; Signal-anchor for type II membrane protein transmembrane segment spans residues 27–47 (FFLFVSLIQFLIILGLVLFMI). Residues 48 to 438 (YGNVHATTES…LVNPAVPPSG (391 aa)) are Extracellular-facing. N-linked (GlcNAc...) asparagine glycans are attached at residues Asn-82, Asn-88, Asn-112, and Asn-150. A coiled-coil region spans residues 289–383 (AGIERVTREN…TEVDVRISAL (95 aa)). Positions 393-438 (PAIQPRLPGPPPNPPPIDPASLEEFKKRILESQRPPLVNPAVPPSG) are disordered. Composition is skewed to pro residues over residues 399–410 (LPGPPPNPPPID) and 429–438 (LVNPAVPPSG).

As to quaternary structure, homodimer. As to expression, expressed in lung (alveolar endothelial and bronchial epithelial cells), kidney (endothelium of peritubular capillaries), spleen, liver, adrenal (endothelial cells of the zona reticularis of the cortex and chromaffin cells in the medulla), pancreas (islets of Langerhans), testis (germ cells, interstitial cells in neonatal testis and spermatids), ovary (stromal endothelial, thecal layer of developing follicles, luteal cells within the corpus luteum), intestine (endothelium of capillaries of the intestinal villi) and pituitary (pituicyte cells in the neural lobe) (at protein level). Expressed in lung, kidney, spleen, liver, adrenal, testis, heart, muscle, pituitary, thyroid and ovary.

The protein resides in the cell membrane. The protein localises to the membrane. It localises to the caveola. It is found in the cytoplasm. Its subcellular location is the perinuclear region. Endothelial cell-specific membrane protein involved in the formation of the diaphragms that bridge endothelial fenestrae. It is also required for the formation of stomata of caveolae and transendothelial channels. Functions in microvascular permeability, endothelial fenestrae contributing to the passage of water and solutes and regulating transcellular versus paracellular flow in different organs. Plays a specific role in embryonic development. The sequence is that of Plasmalemma vesicle-associated protein (Plvap) from Rattus norvegicus (Rat).